Here is a 601-residue protein sequence, read N- to C-terminus: MQQGDYNSYYHHQYSQFQNPTPNPNPNPNPSPPAPATVAGPTDLTRNTYASAPPFTGGYGSADYSNYSQNYTPYGQNSEHVPPSAPSFTSPSQPPPSPPATSLNPNSYSTFNQPPPPPTIHPQPLSSYGSFDSTAPYQQPTSQHMYYSPYDQHQTSGYSSAPPPSSAPAPNPNPAPYSSSLYSAPPYSSGGSSIPPSYEKPSVKFDQSGYDGYNRSRSDLGSDLYGKRSDSGEYPAFEDSYGDGVYAYQGGKVEPYGSRGTAPKSSNSTLFDDYGRSISFSSSGRDSSVSSNSAKIVRAVPKADVQEDSTGGVQKFRVKLLAETYGQTTTDVLCQIGLDGLRMLDPSTSRTLRIYPLENITRCEKLDSSILAFWSKTPVDIEAKRIRLQSNSYTTNTLLDTVTAAMFQAKEIGGSSRPPTSGKLIEQTAEKKKGLGDWMNIIKPVNEEKDHWVPDEAVSKCTSCGSDFGAFIRRHHCRNCGDVFCDKCTQGRIALTAEDNAPQVRVCDRCMAEVSQRLSNAKETTGRNVSLQSHEDLARKLQEEMERNRKSSSGLREGSGRRMKEVACPTCTVHLQVQVPVSGSETIECGVCQNPFLVSAH.

The disordered stretch occupies residues 1–240 (MQQGDYNSYY…SGEYPAFEDS (240 aa)). The span at 21–35 (TPNPNPNPNPSPPAP) shows a compositional bias: pro residues. Composition is skewed to polar residues over residues 63–79 (DYSNYSQNYTPYGQNSE) and 125–155 (LSSYGSFDSTAPYQQPTSQHMYYSPYDQHQT). The span at 161-175 (APPPSSAPAPNPNPA) shows a compositional bias: pro residues. Low complexity predominate over residues 176–197 (PYSSSLYSAPPYSSGGSSIPPS). The segment covering 214–231 (NRSRSDLGSDLYGKRSDS) has biased composition (basic and acidic residues). S218 carries the post-translational modification Phosphoserine. The tract at residues 338–344 (LDGLRML) is nuclear export signal. The FYVE-type zinc finger occupies 455–515 (DEAVSKCTSC…VCDRCMAEVS (61 aa)). The Zn(2+) site is built by C461, C464, C477, C480, C485, C488, C507, and C510. The stretch at 527-552 (RNVSLQSHEDLARKLQEEMERNRKSS) forms a coiled coil. A phosphoserine mark is found at S530 and S533. Positions 542-561 (QEEMERNRKSSSGLREGSGR) are disordered.

As to quaternary structure, part of the ESCRT-I complex. Interacts with VPS23A and VPS23B, but not with VPS28 or VPS37. Interacts with IRT1. Interacts with SH3P2. Interacts with SH3P3, but not with SH3P1. Interacts (via N-terminus) with PYL4 and PYR3. Interacts (via C-terminus) with SNRK2D/SNRK2.2, SNRK2I/SNRK2.3, ABF4 and ABI5. Interacts with SINAT1, SINAT2, SINAT3 and SINAT4. Interacts with SINAT5. Component of a phosphoinositide 3-kinase (PI3K) complex containing ATG6, SH3P2 and FREE1. In terms of processing, phosphorylated at Ser-530 and Ser-533 by SNRK2D/SNRK2.2 and SNRK2I/SNRK2.3 in response to abscisic acid (ABA). Phosphorylation is necessary for ABA-induced FREE1 nuclear import. Ubiquitinated by SINAT1, SINAT2, SINAT3 and SINAT4 for subsequent proteasomal degradation. Ubiquitous. Lowest expression in mature seeds.

The protein localises to the cytoplasm. It is found in the prevacuolar compartment membrane. Its subcellular location is the late endosome. It localises to the endosome. The protein resides in the multivesicular body. The protein localises to the nucleus. Endosomal sorting complex required for transport (ESCRT) component regulating multivesicular body (MVB) protein sorting and plant growth. Required for the formation of intra-luminal vesicles (ILVs)in MVBs. Binds to phosphatidylinositol-3-phosphate (PI3P) and ubiquitin. Controls IRT1 recycling to the plasma membrane and impacts the polar delivery of this transporter to the outer plasma membrane domain. Regulates ubiquitin-dependent membrane protein degradation, vacuolar transport, autophagy, and vacuole biogenesis. ESCRT component that binds ubiquitin and regulates vacuolar sorting of proteins. Attenuates abscisic acid (ABA) signaling through RSL1-triggered degradation of the ABA receptors PYR1 and PYL4. Interacts with PYL4 and PYR1, and delivers the ubiquitinated ABA receptors as cargo to the vacuolar degradation pathway. In response to ABA, is phosphorylated by SnRK2 kinases which mediate FREE1 nuclear import. In the nucleus, interacts with the ABA-responsive transcription factors ABF4 and ABI5 to reduce their ability to bind to their cis-regulatory sequences of downstream genes, thus leading to transcriptional inhibition of ABA signaling pathway. Negatively regulates salt stress tolerance via a negative feedback loop involving ABA signaling pathway. The protein is Protein FREE1 of Arabidopsis thaliana (Mouse-ear cress).